The primary structure comprises 308 residues: 2-methylisocitrate lyase (308 aa).

51 to 53 (SGA) is a binding site for substrate. Positions 90 and 92 each coordinate Mg(2+). Residues 127-128 (CG), R160, E190, 212-214 (NMT), R243, and R272 each bind substrate.

The protein belongs to the isocitrate lyase/PEP mutase superfamily. Methylisocitrate lyase family. In terms of assembly, homotetramer; dimer of dimers. The cofactor is Mg(2+).

It carries out the reaction (2S,3R)-3-hydroxybutane-1,2,3-tricarboxylate = pyruvate + succinate. It functions in the pathway organic acid metabolism; propanoate degradation. Its function is as follows. Involved in the catabolism of short chain fatty acids (SCFA) via the 2-methylcitrate cycle I (propionate degradation route). Catalyzes the thermodynamically favored C-C bond cleavage of (2R,3S)-2-methylisocitrate to yield pyruvate and succinate via an alpha-carboxy-carbanion intermediate. This Aeropyrum pernix (strain ATCC 700893 / DSM 11879 / JCM 9820 / NBRC 100138 / K1) protein is 2-methylisocitrate lyase.